Reading from the N-terminus, the 436-residue chain is Chorion-specific transcription factor GCMa (436 aa).

The segment at residues 14-169 is a DNA-binding region (GCM); sequence LSWDINDVKL…KLEAEARRAM (156 aa). 8 residues coordinate Zn(2+): cysteine 76, cysteine 82, cysteine 86, cysteine 113, cysteine 116, cysteine 125, histidine 152, and histidine 154. Positions 171–202 are disordered; the sequence is KVNTAPSSVSLSLKGSTETRSLPGETQSQGSL. The segment covering 174–202 has biased composition (polar residues); that stretch reads TAPSSVSLSLKGSTETRSLPGETQSQGSL.

Post-translationally, polyubiquitinated in the presence of UBE2D2 and FBXW2 (in vitro). Highly expressed in the placenta. Expressed in trophoblast cells of the villi.

The protein resides in the nucleus. Functionally, transcription factor involved in the control of expression of placental growth factor (PGF) and other placenta-specific genes. Binds to the trophoblast-specific element 2 (TSE2) of the aromatase gene enhancer. Binds to the SYDE1 promoter. Has a central role in mediating the differentiation of trophoblast cells along both the villous and extravillous pathways in placental development. In Homo sapiens (Human), this protein is Chorion-specific transcription factor GCMa (GCM1).